Here is a 469-residue protein sequence, read N- to C-terminus: Phosphatidylinositol 4-kinase type 2-beta (469 aa).

Positions 1–84 (MAEACEPTRP…LDRTRTTSSE (84 aa)) are disordered. Position 37 is a phosphoserine (S37). Residues 108–439 (GVFPERISQG…AQMPCVIVEC (332 aa)) form the PI3K/PI4K catalytic domain. The interval 114-120 (ISQGSSG) is G-loop. S121 and K136 together coordinate ATP. The segment at 141–143 (EPY) is important for substrate binding. Residues 149–162 (KWTKYVHKVCCPCC) are important for interaction with membranes. ATP contacts are provided by residues 245-248 (QLFV) and 259-260 (RR). The important for interaction with membranes stretch occupies residues 252-260 (KEAEYWLRR). The segment at 289–297 (RNTDRGNDN) is catalytic loop. An activation loop region spans residues 330 to 350 (AIDNGLAFPFKHPDEWRAYPF). D332 lines the ATP pocket. The tract at residues 345 to 354 (WRAYPFHWAW) is important for interaction with membranes.

The protein belongs to the PI3/PI4-kinase family. Type II PI4K subfamily.

The protein localises to the cytoplasm. It is found in the cytosol. Its subcellular location is the golgi apparatus membrane. It localises to the endoplasmic reticulum membrane. The protein resides in the cell membrane. The protein localises to the early endosome membrane. It catalyses the reaction a 1,2-diacyl-sn-glycero-3-phospho-(1D-myo-inositol) + ATP = a 1,2-diacyl-sn-glycero-3-phospho-(1D-myo-inositol 4-phosphate) + ADP + H(+). In terms of biological role, together with PI4K2A and the type III PI4Ks (PIK4CA and PIK4CB) it contributes to the overall PI4-kinase activity of the cell. This contribution may be especially significant in plasma membrane, endosomal and Golgi compartments. The phosphorylation of phosphatidylinositol (PI) to PI4P is the first committed step in the generation of phosphatidylinositol 4,5-bisphosphate (PIP2), a precursor of the second messenger inositol 1,4,5-trisphosphate (InsP3). Contributes to the production of InsP3 in stimulated cells and is likely to be involved in the regulation of vesicular trafficking. The chain is Phosphatidylinositol 4-kinase type 2-beta (Pi4k2b) from Mus musculus (Mouse).